Here is a 646-residue protein sequence, read N- to C-terminus: P-selectin (646 aa).

The signal sequence occupies residues 1 to 41 (MASCPKAIWNWRFQRAVFRTVQLLCFSVLIFEVINQKEVSA). Over 42 to 587 (WTYHYSNKTY…QAGPLTIQET (546 aa)) the chain is Extracellular. 3 N-linked (GlcNAc...) asparagine glycosylation sites follow: N48, N54, and N80. A C-type lectin domain is found at 58–158 (AFCQKYYTDL…PCWKRKRALC (101 aa)). Disulfide bonds link C60-C158, C131-C150, C163-C174, C168-C183, C185-C194, C200-C244, C230-C257, C262-C306, C292-C319, C324-C368, C354-C381, C386-C430, C416-C443, C458-C502, C488-C515, C520-C564, and C550-C577. 3 residues coordinate Ca(2+): E121, N123, and N124. N123 contributes to the a carbohydrate binding site. Residues E133 and N146 each contribute to the a carbohydrate site. The Ca(2+) site is built by N146 and D147. The EGF-like domain maps to 159–195 (YRASCQDMSCSKQGECIETIGNYTCSCYPGFYGPECE). An N-linked (GlcNAc...) asparagine glycan is attached at N180. Sushi domains follow at residues 198–259 (RECG…QCVA), 260–321 (VQCP…VCKA), 322–383 (LQCQ…ECQA), 384–445 (VTCA…TCEE), 456–517 (VQCP…TCRA), and 518–579 (VKCA…TCQA). Residues N212 and N219 are each glycosylated (N-linked (GlcNAc...) asparagine). An N-linked (GlcNAc...) asparagine glycan is attached at N336. An N-linked (GlcNAc...) asparagine glycan is attached at N481. N532, N539, and N557 each carry an N-linked (GlcNAc...) asparagine glycan. Residues 588–611 (LTYVGGAAAGTTGLVTGSILLALL) traverse the membrane as a helical segment. Topologically, residues 612 to 646 (RRRCRQKDDGKSPLNPQSHLGTYGVFTNAAFDPSP) are cytoplasmic. The Endocytosis signal signature appears at 634–637 (YGVF). The segment at 637–646 (FTNAAFDPSP) is interaction with SNX17.

It belongs to the selectin/LECAM family. Interacts with SNX17. Interacts with SELPLG/PSGL1 and PODXL2 and mediates neutrophil adhesion and leukocyte rolling. This interaction requires the sialyl-Lewis X epitope of SELPLG and PODXL2, and specific tyrosine sulfation on SELPLG. Interacts (via C-type lectin domain) with alpha-IIb/beta3 integrin ITGA2B:ITGB3 and alpha-V/beta-3 integrin ITGAV:ITGB3. Interacts with alpha5/beta1 integrin ITGA5:ITGB1 and alpha4/beta1 integrin ITGA4:ITGB. Stored in the alpha-granules of platelets and Weibel-Palade bodies of endothelial cells. Upon cell activation by agonists, P-selectin is transported rapidly to the cell surface.

It localises to the cell membrane. Functionally, ca(2+)-dependent receptor for myeloid cells that binds to carbohydrates on neutrophils and monocytes. Mediates the interaction of activated endothelial cells or platelets with leukocytes. The ligand recognized is sialyl-Lewis X. Mediates rapid rolling of leukocyte rolling over vascular surfaces during the initial steps in inflammation through interaction with SELPLG. Mediates cell-cell interactions and cell adhesion via the interaction with integrin alpha-IIb/beta3 (ITGA2B:ITGB3) and integrin alpha-V/beta-3 (ITGAV:ITGB3). The protein is P-selectin (SELP) of Bos taurus (Bovine).